Reading from the N-terminus, the 229-residue chain is Indole-3-glycerol phosphate synthase (229 aa).

The protein belongs to the TrpC family.

It catalyses the reaction 1-(2-carboxyphenylamino)-1-deoxy-D-ribulose 5-phosphate + H(+) = (1S,2R)-1-C-(indol-3-yl)glycerol 3-phosphate + CO2 + H2O. It functions in the pathway amino-acid biosynthesis; L-tryptophan biosynthesis; L-tryptophan from chorismate: step 4/5. In Pyrococcus abyssi (strain GE5 / Orsay), this protein is Indole-3-glycerol phosphate synthase.